The sequence spans 612 residues: Elongation factor 4 (612 aa).

One can recognise a tr-type G domain in the interval 11–193 (KHIRNFSIVA…RIVTDISAPT (183 aa)). Residues 23–28 (DHGKST) and 140–143 (NKID) contribute to the GTP site.

This sequence belongs to the TRAFAC class translation factor GTPase superfamily. Classic translation factor GTPase family. LepA subfamily.

It localises to the cell membrane. The enzyme catalyses GTP + H2O = GDP + phosphate + H(+). Functionally, required for accurate and efficient protein synthesis under certain stress conditions. May act as a fidelity factor of the translation reaction, by catalyzing a one-codon backward translocation of tRNAs on improperly translocated ribosomes. Back-translocation proceeds from a post-translocation (POST) complex to a pre-translocation (PRE) complex, thus giving elongation factor G a second chance to translocate the tRNAs correctly. Binds to ribosomes in a GTP-dependent manner. The protein is Elongation factor 4 of Lactobacillus delbrueckii subsp. bulgaricus (strain ATCC 11842 / DSM 20081 / BCRC 10696 / JCM 1002 / NBRC 13953 / NCIMB 11778 / NCTC 12712 / WDCM 00102 / Lb 14).